We begin with the raw amino-acid sequence, 323 residues long: Mitochondrial glutamate carrier 1 (323 aa).

3 Solcar repeats span residues 6–93 (ISLP…FRHQ), 101–214 (LTLP…LNQL), and 223–312 (SPFY…GIAE). Helical transmembrane passes span 12-32 (LING…IDLA), 62-82 (YFGM…EKAI), 107-127 (MLAG…MEML), 189-209 (GLGA…PLFA), 223-243 (SPFY…AVAV), and 292-312 (ALVI…GIAE).

This sequence belongs to the mitochondrial carrier (TC 2.A.29) family.

It localises to the mitochondrion inner membrane. The catalysed reaction is L-glutamate(in) + H(+)(in) = L-glutamate(out) + H(+)(out). In terms of biological role, mitochondrial glutamate/H(+) symporter. Responsible for the transport of glutamate from the cytosol into the mitochondrial matrix with the concomitant import of a proton. Plays a role in the control of glucose-stimulated insulin secretion. The sequence is that of Mitochondrial glutamate carrier 1 (Slc25a22) from Mus musculus (Mouse).